Consider the following 608-residue polypeptide: Phosphogluconate dehydratase (608 aa).

Residues cysteine 154 and cysteine 221 each coordinate [4Fe-4S] cluster.

It belongs to the IlvD/Edd family. [4Fe-4S] cluster is required as a cofactor.

It carries out the reaction 6-phospho-D-gluconate = 2-dehydro-3-deoxy-6-phospho-D-gluconate + H2O. It functions in the pathway carbohydrate metabolism; Entner-Doudoroff pathway. Catalyzes the dehydration of 6-phospho-D-gluconate to 2-dehydro-3-deoxy-6-phospho-D-gluconate. This Helicobacter pylori (strain J99 / ATCC 700824) (Campylobacter pylori J99) protein is Phosphogluconate dehydratase.